A 176-amino-acid chain; its full sequence is MNAENDSSLPKPQWIYRVGIGQDSHRFLSESSAKPCILAGVIFENSPGFQANSDGDIIFHAICNAISSVTHRIILGEVADELLHTRGITDSSVYLSEAIKSLKSNQMISHAAITIEGNRPKFLPKLSAMRQSIASALNIPLGSVGITATSGEGLSDFGCGDGVQCFCILTIMEYCG.

Asp23, His25, and His60 together coordinate a divalent metal cation. Residue 23–25 participates in 4-CDP-2-C-methyl-D-erythritol 2-phosphate binding; sequence DSH. Position 149 to 152 (149 to 152) interacts with 4-CDP-2-C-methyl-D-erythritol 2-phosphate; sequence TSGE.

This sequence belongs to the IspF family. As to quaternary structure, homotrimer. The cofactor is a divalent metal cation.

The catalysed reaction is 4-CDP-2-C-methyl-D-erythritol 2-phosphate = 2-C-methyl-D-erythritol 2,4-cyclic diphosphate + CMP. The protein operates within isoprenoid biosynthesis; isopentenyl diphosphate biosynthesis via DXP pathway; isopentenyl diphosphate from 1-deoxy-D-xylulose 5-phosphate: step 4/6. Involved in the biosynthesis of isopentenyl diphosphate (IPP) and dimethylallyl diphosphate (DMAPP), two major building blocks of isoprenoid compounds. Catalyzes the conversion of 4-diphosphocytidyl-2-C-methyl-D-erythritol 2-phosphate (CDP-ME2P) to 2-C-methyl-D-erythritol 2,4-cyclodiphosphate (ME-CPP) with a corresponding release of cytidine 5-monophosphate (CMP). This Chlamydia abortus (strain DSM 27085 / S26/3) (Chlamydophila abortus) protein is 2-C-methyl-D-erythritol 2,4-cyclodiphosphate synthase.